The sequence spans 511 residues: Peptide transporter YePEPT (511 aa).

At M1–P19 the chain is on the cytoplasmic side. A helical transmembrane segment spans residues L20–M45. The Periplasmic portion of the chain corresponds to A46–E59. The chain crosses the membrane as a helical span at residues Q60–D84. Over N85–G88 the chain is Cytoplasmic. A helical membrane pass occupies residues Q89–L109. Residues S110–N115 lie on the Periplasmic side of the membrane. A helical transmembrane segment spans residues D116–V138. The Cytoplasmic segment spans residues M139–A149. A helical membrane pass occupies residues R150 to W175. Over L176 to G181 the chain is Periplasmic. Residues W182 to M208 traverse the membrane as a helical segment. The Cytoplasmic portion of the chain corresponds to K209–G232. A helical transmembrane segment spans residues R233–V253. The Periplasmic portion of the chain corresponds to I254–I256. The chain crosses the membrane as a helical span at residues N257 to Y279. Residues L280–L294 are Cytoplasmic-facing. The helical transmembrane segment at L295–F321 threads the bilayer. The Periplasmic portion of the chain corresponds to A322–I335. The helical transmembrane segment at P336–W357 threads the bilayer. The Cytoplasmic segment spans residues A358–P369. The chain crosses the membrane as a helical span at residues S370–V396. Residues L397–S405 are Periplasmic-facing. Residues P406–I426 traverse the membrane as a helical segment. Over G427–G441 the chain is Cytoplasmic. A helical membrane pass occupies residues Q442 to G462. Residues G463–D471 lie on the Periplasmic side of the membrane. A helical membrane pass occupies residues M472–V496. Over P497–A511 the chain is Cytoplasmic.

This sequence belongs to the major facilitator superfamily. Proton-dependent oligopeptide transporter (POT/PTR) (TC 2.A.17) family.

It is found in the cell inner membrane. Its activity is regulated as follows. Transport is inhibited by the proton ionophore carbonyl cyanide m-chlorophenylhydrazone (CCCP). Functionally, mediates the proton-dependent uptake of dipeptides. Shows higher affinity for dipeptides with a negatively charged amino acid residue at the N-terminal position, such as Asp-Ala and Glu-Ala. Also displays specificity for Ala-Ala, Ala-Tyr and Tyr-Ala. The chain is Peptide transporter YePEPT from Yersinia enterocolitica subsp. palearctica serotype O:3 (strain YE-P4).